Consider the following 260-residue polypeptide: MICOS complex subunit mic25-a (260 aa).

The disordered stretch occupies residues 1 to 92; the sequence is MGGSESTGRK…KPTARGVGHQ (92 aa). Residue G2 is the site of N-myristoyl glycine attachment. Residues 28–39 show a composition bias toward basic and acidic residues; the sequence is RLSDEVVNRMKD. Positions 48-64 are enriched in low complexity; the sequence is STSTASGTTSGPTTFPS. Residues 94–187 adopt a coiled-coil conformation; the sequence is AEEDLYRRYE…LNSIEKKNLE (94 aa). Residues 213–255 enclose the CHCH domain; that stretch reads DPVCMDLQSNILKCYAENKQERLNCSDLAKEYGKCVSAAQKNL. 2 consecutive short sequence motifs (cx9C motif) follow at residues 216–226 and 237–247; these read CMDLQSNILKC and CSDLAKEYGKC. Disulfide bonds link C216/C247 and C226/C237.

The protein belongs to the MICOS complex subunit Mic19 family. Metazoan Mic25 subfamily. Component of the mitochondrial contact site and cristae organizing system (MICOS) complex (also known as MINOS or MitOS complex).

The protein localises to the mitochondrion inner membrane. Component of the MICOS complex, a large protein complex of the mitochondrial inner membrane that plays crucial roles in the maintenance of crista junctions, inner membrane architecture, and formation of contact sites to the outer membrane. This is MICOS complex subunit mic25-a (chchd6-a) from Xenopus laevis (African clawed frog).